The sequence spans 133 residues: Small ribosomal subunit protein uS8 (133 aa).

The protein belongs to the universal ribosomal protein uS8 family. As to quaternary structure, part of the 30S ribosomal subunit. Contacts proteins S5 and S12.

One of the primary rRNA binding proteins, it binds directly to 16S rRNA central domain where it helps coordinate assembly of the platform of the 30S subunit. The sequence is that of Small ribosomal subunit protein uS8 from Chlamydia pneumoniae (Chlamydophila pneumoniae).